The following is a 207-amino-acid chain: N-(5'-phosphoribosyl)anthranilate isomerase (207 aa).

The protein belongs to the TrpF family.

The enzyme catalyses N-(5-phospho-beta-D-ribosyl)anthranilate = 1-(2-carboxyphenylamino)-1-deoxy-D-ribulose 5-phosphate. It participates in amino-acid biosynthesis; L-tryptophan biosynthesis; L-tryptophan from chorismate: step 3/5. The sequence is that of N-(5'-phosphoribosyl)anthranilate isomerase from Legionella pneumophila subsp. pneumophila (strain Philadelphia 1 / ATCC 33152 / DSM 7513).